A 76-amino-acid chain; its full sequence is MTVIRLTRIGRKKKPFYRVVVTDSRKRRDGGWIESIGYYNPLSEPKDIKIDKERLNYWKGVGAKMSERVEKLSQKA.

Belongs to the bacterial ribosomal protein bS16 family.

This is Small ribosomal subunit protein bS16 from Helicobacter pylori (strain P12).